The chain runs to 340 residues: Methionine import ATP-binding protein MetN 2 (340 aa).

Residues 2-241 (ITLQNVVKEY…PQEKVTQRFV (240 aa)) enclose the ABC transporter domain. Residue 38–45 (GYSGAGKS) participates in ATP binding.

Belongs to the ABC transporter superfamily. Methionine importer (TC 3.A.1.24) family. In terms of assembly, the complex is composed of two ATP-binding proteins (MetN), two transmembrane proteins (MetI) and a solute-binding protein (MetQ).

The protein localises to the cell membrane. It catalyses the reaction L-methionine(out) + ATP + H2O = L-methionine(in) + ADP + phosphate + H(+). The catalysed reaction is D-methionine(out) + ATP + H2O = D-methionine(in) + ADP + phosphate + H(+). Functionally, part of the ABC transporter complex MetNIQ involved in methionine import. Responsible for energy coupling to the transport system. This is Methionine import ATP-binding protein MetN 2 from Listeria monocytogenes serovar 1/2a (strain ATCC BAA-679 / EGD-e).